Consider the following 181-residue polypeptide: MILVVGLGNIGVEYENTRHNVGFMLIDLLLKESNFTNLTNSKFKGELFKIGSSLLLLKPSTYMNNSGLSVKAVNDFYKCERMIVIHDDIDINLGALRFKKGGSSGGHNGLKSIDTLCGNDYERVRIGVGKGENVISHVLGKFKPEEEITLSKVLEHTKKALLELIENDDLSAISSKYSLKA.

Position 14 (Tyr14) interacts with tRNA. The active-site Proton acceptor is the His19. The tRNA site is built by Tyr62, Asn64, and Asn108.

It belongs to the PTH family. Monomer.

Its subcellular location is the cytoplasm. The enzyme catalyses an N-acyl-L-alpha-aminoacyl-tRNA + H2O = an N-acyl-L-amino acid + a tRNA + H(+). Its function is as follows. Hydrolyzes ribosome-free peptidyl-tRNAs (with 1 or more amino acids incorporated), which drop off the ribosome during protein synthesis, or as a result of ribosome stalling. In terms of biological role, catalyzes the release of premature peptidyl moieties from peptidyl-tRNA molecules trapped in stalled 50S ribosomal subunits, and thus maintains levels of free tRNAs and 50S ribosomes. In Campylobacter jejuni (strain RM1221), this protein is Peptidyl-tRNA hydrolase.